The primary structure comprises 428 residues: 3-phosphoshikimate 1-carboxyvinyltransferase (428 aa).

3-phosphoshikimate-binding residues include Lys-21, Ser-22, and Arg-26. Residue Lys-21 participates in phosphoenolpyruvate binding. The phosphoenolpyruvate site is built by Gly-92 and Arg-120. 3-phosphoshikimate is bound by residues Ser-165, Gln-167, Asp-313, and Lys-340. Residue Gln-167 coordinates phosphoenolpyruvate. Residue Asp-313 is the Proton acceptor of the active site. Phosphoenolpyruvate is bound by residues Arg-344 and Arg-386.

It belongs to the EPSP synthase family. Monomer.

Its subcellular location is the cytoplasm. The enzyme catalyses 3-phosphoshikimate + phosphoenolpyruvate = 5-O-(1-carboxyvinyl)-3-phosphoshikimate + phosphate. The protein operates within metabolic intermediate biosynthesis; chorismate biosynthesis; chorismate from D-erythrose 4-phosphate and phosphoenolpyruvate: step 6/7. In terms of biological role, catalyzes the transfer of the enolpyruvyl moiety of phosphoenolpyruvate (PEP) to the 5-hydroxyl of shikimate-3-phosphate (S3P) to produce enolpyruvyl shikimate-3-phosphate and inorganic phosphate. This is 3-phosphoshikimate 1-carboxyvinyltransferase from Carboxydothermus hydrogenoformans (strain ATCC BAA-161 / DSM 6008 / Z-2901).